The primary structure comprises 299 residues: 4-hydroxy-tetrahydrodipicolinate synthase 2 (299 aa).

Thr54 is a binding site for pyruvate. Residue Tyr142 is the Proton donor/acceptor of the active site. Lys170 functions as the Schiff-base intermediate with substrate in the catalytic mechanism. Val210 contributes to the pyruvate binding site.

This sequence belongs to the DapA family. In terms of assembly, homotetramer; dimer of dimers.

It is found in the cytoplasm. The enzyme catalyses L-aspartate 4-semialdehyde + pyruvate = (2S,4S)-4-hydroxy-2,3,4,5-tetrahydrodipicolinate + H2O + H(+). It participates in amino-acid biosynthesis; L-lysine biosynthesis via DAP pathway; (S)-tetrahydrodipicolinate from L-aspartate: step 3/4. Its function is as follows. Catalyzes the condensation of (S)-aspartate-beta-semialdehyde [(S)-ASA] and pyruvate to 4-hydroxy-tetrahydrodipicolinate (HTPA). The protein is 4-hydroxy-tetrahydrodipicolinate synthase 2 of Streptomyces coelicolor (strain ATCC BAA-471 / A3(2) / M145).